A 211-amino-acid chain; its full sequence is Uridine kinase (211 aa).

13–20 (GGSGSGKT) lines the ATP pocket.

It belongs to the uridine kinase family.

It localises to the cytoplasm. The enzyme catalyses uridine + ATP = UMP + ADP + H(+). It catalyses the reaction cytidine + ATP = CMP + ADP + H(+). The protein operates within pyrimidine metabolism; CTP biosynthesis via salvage pathway; CTP from cytidine: step 1/3. Its pathway is pyrimidine metabolism; UMP biosynthesis via salvage pathway; UMP from uridine: step 1/1. The polypeptide is Uridine kinase (Lactobacillus johnsonii (strain CNCM I-12250 / La1 / NCC 533)).